Here is a 620-residue protein sequence, read N- to C-terminus: 1-deoxy-D-xylulose-5-phosphate synthase (620 aa).

Residues His80 and 121–123 (GHS) each bind thiamine diphosphate. Mg(2+) is bound at residue Asp152. Residues 153 to 154 (GA), Asn181, Tyr288, and Glu370 contribute to the thiamine diphosphate site. Asn181 is a binding site for Mg(2+).

Belongs to the transketolase family. DXPS subfamily. Homodimer. It depends on Mg(2+) as a cofactor. The cofactor is thiamine diphosphate.

The catalysed reaction is D-glyceraldehyde 3-phosphate + pyruvate + H(+) = 1-deoxy-D-xylulose 5-phosphate + CO2. Its pathway is metabolic intermediate biosynthesis; 1-deoxy-D-xylulose 5-phosphate biosynthesis; 1-deoxy-D-xylulose 5-phosphate from D-glyceraldehyde 3-phosphate and pyruvate: step 1/1. Its function is as follows. Catalyzes the acyloin condensation reaction between C atoms 2 and 3 of pyruvate and glyceraldehyde 3-phosphate to yield 1-deoxy-D-xylulose-5-phosphate (DXP). The protein is 1-deoxy-D-xylulose-5-phosphate synthase of Citrobacter koseri (strain ATCC BAA-895 / CDC 4225-83 / SGSC4696).